The sequence spans 360 residues: Peptide chain release factor 1 (360 aa).

Gln235 carries the post-translational modification N5-methylglutamine. The tract at residues 285–313 (KRQQAEASTRRNLLGSGDRSDRNRTYNFP) is disordered.

It belongs to the prokaryotic/mitochondrial release factor family. Post-translationally, methylated by PrmC. Methylation increases the termination efficiency of RF1.

Its subcellular location is the cytoplasm. Peptide chain release factor 1 directs the termination of translation in response to the peptide chain termination codons UAG and UAA. This chain is Peptide chain release factor 1, found in Shigella boydii serotype 18 (strain CDC 3083-94 / BS512).